The chain runs to 571 residues: Proline--tRNA ligase (571 aa).

The protein belongs to the class-II aminoacyl-tRNA synthetase family. ProS type 1 subfamily. As to quaternary structure, homodimer.

The protein resides in the cytoplasm. The enzyme catalyses tRNA(Pro) + L-proline + ATP = L-prolyl-tRNA(Pro) + AMP + diphosphate. Its function is as follows. Catalyzes the attachment of proline to tRNA(Pro) in a two-step reaction: proline is first activated by ATP to form Pro-AMP and then transferred to the acceptor end of tRNA(Pro). As ProRS can inadvertently accommodate and process non-cognate amino acids such as alanine and cysteine, to avoid such errors it has two additional distinct editing activities against alanine. One activity is designated as 'pretransfer' editing and involves the tRNA(Pro)-independent hydrolysis of activated Ala-AMP. The other activity is designated 'posttransfer' editing and involves deacylation of mischarged Ala-tRNA(Pro). The misacylated Cys-tRNA(Pro) is not edited by ProRS. This is Proline--tRNA ligase from Histophilus somni (strain 2336) (Haemophilus somnus).